We begin with the raw amino-acid sequence, 118 residues long: cAMP-responsive element-binding protein-like 2 (118 aa).

The tract at residues 1 to 25 (MDDSKVSGGKVKKPGKRGRKPAKID) is disordered. Residues 10–21 (KVKKPGKRGRKP) are compositionally biased toward basic residues. Residues 23-86 (KIDLKAKLER…AAMDQGKIPS (64 aa)) enclose the bZIP domain. The basic motif stretch occupies residues 29 to 60 (KLERSRQSARECRARKKLRYQYLEELVSSRER). Residues 62 to 69 (ICALREEL) form a leucine-zipper region.

This sequence belongs to the bZIP family. ATF subfamily.

The protein localises to the nucleus. In terms of biological role, probable regulator of creb1 transcriptional activity which is involved in adipose cells differentiation. May also play a regulatory role in the cell cycle. The chain is cAMP-responsive element-binding protein-like 2 (crebl2) from Xenopus tropicalis (Western clawed frog).